The chain runs to 450 residues: UDP-N-acetylmuramoylalanine--D-glutamate ligase (450 aa).

115–121 (GTNGKST) contacts ATP.

It belongs to the MurCDEF family.

It localises to the cytoplasm. It carries out the reaction UDP-N-acetyl-alpha-D-muramoyl-L-alanine + D-glutamate + ATP = UDP-N-acetyl-alpha-D-muramoyl-L-alanyl-D-glutamate + ADP + phosphate + H(+). Its pathway is cell wall biogenesis; peptidoglycan biosynthesis. Its function is as follows. Cell wall formation. Catalyzes the addition of glutamate to the nucleotide precursor UDP-N-acetylmuramoyl-L-alanine (UMA). The chain is UDP-N-acetylmuramoylalanine--D-glutamate ligase from Syntrophotalea carbinolica (strain DSM 2380 / NBRC 103641 / GraBd1) (Pelobacter carbinolicus).